The primary structure comprises 100 residues: Ubiquinol-cytochrome-C reductase complex subunit IX, mitochondrial (100 aa).

A mitochondrion-targeting transit peptide spans 1–30 (MQTHVRRVALQALRPCLRAGLMAPKFPVRF). A helical transmembrane segment spans residues 66-86 (LLMRLFFAFVAYVVAMKVFGA).

As to quaternary structure, plants bc1 complex contains 10 subunits; 3 respiratory subunits, 2 core proteins and 5 low-molecular weight proteins.

The protein localises to the mitochondrion inner membrane. Its function is as follows. This is a component of the ubiquinol-cytochrome c reductase complex (complex III or cytochrome b-c1 complex), which is part of the mitochondrial respiratory chain. The chain is Ubiquinol-cytochrome-C reductase complex subunit IX, mitochondrial from Euglena gracilis.